A 510-amino-acid chain; its full sequence is Sphingolipid C9-methyltransferase B (510 aa).

Asparagine 55 carries an N-linked (GlcNAc...) asparagine glycan. The next 2 membrane-spanning stretches (helical) occupy residues leucine 62 to alanine 82 and threonine 84 to alanine 104. Residue asparagine 175 is glycosylated (N-linked (GlcNAc...) asparagine). Residues tyrosine 227 to threonine 228, methionine 264 to glycine 272, threonine 290 to glutamine 295, and tyrosine 320 to arginine 321 contribute to the S-adenosyl-L-methionine site. Asparagine 294 carries N-linked (GlcNAc...) asparagine glycosylation.

The protein belongs to the CFA/CMAS family.

The protein localises to the membrane. It carries out the reaction a (4E,8E)-4-sphinga-4,8-dienine ceramide + S-adenosyl-L-methionine = a 9-methyl-(4E,8E)-sphinga-4,8-dienine ceramide + S-adenosyl-L-homocysteine + H(+). Its pathway is lipid metabolism; sphingolipid metabolism. Functionally, catalyzes methylation of the sphingoid base component of glucosylceramides (GluCers) at the C9-position. Sphingolipid C9-methylation requires 4,8-desaturated ceramides as substrates. Glucosylceramides play important roles in growth, differentiation and pathogenicity. The methyl group at the C9-position distinguishes fungal glucosylceramides from those of plants and animals and may thus play a role in host-pathogen interactions enabling the host to recognize the fungal attack and initiate specific defense responses. The sequence is that of Sphingolipid C9-methyltransferase B from Emericella nidulans (strain FGSC A4 / ATCC 38163 / CBS 112.46 / NRRL 194 / M139) (Aspergillus nidulans).